A 412-amino-acid chain; its full sequence is Branched-chain alpha-ketoacid dehydrogenase kinase (412 aa).

Residues 1–30 (MILTSVLGSGPRSGSSLWPLLGSSLSLRVR) constitute a mitochondrion transit peptide. A Phosphoserine modification is found at Ser-31. Residues 159-404 (LDDHKDVVTL…DVYLRLRHID (246 aa)) enclose the Histidine kinase domain. Residues Lys-192 and Lys-233 each carry the N6-acetyllysine modification. ATP-binding residues include Asn-279 and Asp-315. Position 279 (Asn-279) interacts with Mg(2+). K(+)-binding residues include Val-328, Asp-330, and Phe-333. Residues Thr-334 and Thr-335 each contribute to the ATP site. 2 positions are modified to phosphoserine: Ser-356 and Ser-360. ATP is bound by residues His-364, Gly-367, and Leu-370. A K(+)-binding site is contributed by Gly-367.

Belongs to the PDK/BCKDK protein kinase family. Homodimer. Homotetramer. Dimerizes through interaction of two opposing nucleotide-binding domains. Interacts with E2 component of the branched-chain alpha-ketoacid dehydrogenase (BCKDH) complex. Competes with BCKDK for binding to the E2 component; this interaction is modulated by branched-chain alpha-keto acids. At steady state, BCKDH holoenzyme contains BCKDK and BCKDHA is phosphorylated. In response to high levels of branched-chain alpha-keto acids, the inhibitory BCKDK is replaced by activating PPM1K leading to BCKDHA dephosphorylation and BCAA degradation. Autophosphorylated. As to expression, expressed in heart and liver.

It localises to the mitochondrion matrix. It is found in the mitochondrion. The enzyme catalyses L-seryl-[3-methyl-2-oxobutanoate dehydrogenase] + ATP = O-phospho-L-seryl-[3-methyl-2-oxobutanoate dehydrogenase] + ADP + H(+). It catalyses the reaction L-seryl-[protein] + ATP = O-phospho-L-seryl-[protein] + ADP + H(+). Its activity is regulated as follows. The ATP-ase activity is up-regulated by potassium and rubidium ions but not by sodium ions. Up-regulated in the presence of apo- or lipoylated-DBT/E2b subunit of the BCKDH complex. In terms of biological role, serine/threonine-protein kinase component of macronutrients metabolism. Forms a functional kinase and phosphatase pair with PPM1K, serving as a metabolic regulatory node that coordinates branched-chain amino acids (BCAAs) with glucose and lipid metabolism via two distinct phosphoprotein targets: mitochondrial BCKDHA subunit of the branched-chain alpha-ketoacid dehydrogenase (BCKDH) complex and cytosolic ACLY, a lipogenic enzyme of Krebs cycle. Phosphorylates and inactivates mitochondrial BCKDH complex a multisubunit complex consisting of three multimeric components each involved in different steps of BCAA catabolism: E1 composed of BCKDHA and BCKDHB, E2 core composed of DBT monomers, and E3 composed of DLD monomers. Associates with the E2 component of BCKDH complex and phosphorylates BCKDHA on Ser-333, leading to conformational changes that interrupt substrate channeling between E1 and E2 and inactivates the BCKDH complex. phosphorylates ACLY on Ser-455 in response to changes in cellular carbohydrate abundance such as occurs during fasting to feeding metabolic transition. Refeeding stimulates MLXIPL/ChREBP transcription factor, leading to increased BCKDK to PPM1K expression ratio, phosphorylation and activation of ACLY that ultimately results in the generation of malonyl-CoA and oxaloacetate immediate substrates of de novo lipogenesis and glucogenesis, respectively. Recognizes phosphosites having SxxE/D canonical motif. The sequence is that of Branched-chain alpha-ketoacid dehydrogenase kinase (Bckdk) from Rattus norvegicus (Rat).